We begin with the raw amino-acid sequence, 513 residues long: MDSSNAIFKSFLGKAPEWYKICIIAFLVINPLIYFFISPFVAGWALVAEFIFTLSMALKCYPLQPGGLLAIEAVFIGMTSAHHVKEEIMANFEVILLLMFMVAGIYFMKQLLLYVFTKLLIVIHSKKILSLAFCLSATFLSAFLDALTVIAVIISVGTGFYGVYHKVASGNSFEDSTDISNDEKIITNKEILEQFRAFLRSLLMHAAVGSALGGVMTMVGEPQNLIIAGQAEWGFVEFLLRVLPVSLPVLICGVITCLLLEHFKIFGYGARLPRRVWGVLARYNLLKEQRMTQQDRVKMGIQALAGIWLVVGLALHLADVGIIGLTIIIICTAFCGITDEHAIGRSFQEPMPFTALIVVFFTVVAVIVDLKLFEPIISYVLSADPHSQLALFYVFNGLLSMISDNVFVGTVYINEAKTALESAIISREQFDLIAVAINTGTNLPSVATPNGQAAFLFLLTSPFAPLIRLSYGKMLYMALPYTIVLSIIGFLSLEFLLPPLTELMSNWGWIITR.

The next 12 helical transmembrane spans lie at 21-41, 64-84, 88-108, 119-139, 143-163, 202-222, 243-263, 299-318, 322-344, 350-370, 389-409, and 477-497; these read ICIIAFLVINPLIYFFISPFV, QPGGLLAIEAVFIGMTSAHHV, IMANFEVILLLMFMVAGIYFM, LLIVIHSKKILSLAFCLSATF, FLDALTVIAVIISVGTGFYGV, LLMHAAVGSALGGVMTMVGEP, LPVSLPVLICGVITCLLLEHF, MGIQALAGIWLVVGLALHLA, IIGLTIIIICTAFCGITDEHAIG, PMPFTALIVVFFTVVAVIVDL, LALFYVFNGLLSMISDNVFVG, and MALPYTIVLSIIGFLSLEFLL.

Belongs to the NhaB Na(+)/H(+) (TC 2.A.34) antiporter family.

It localises to the cell inner membrane. It carries out the reaction 2 Na(+)(in) + 3 H(+)(out) = 2 Na(+)(out) + 3 H(+)(in). Na(+)/H(+) antiporter that extrudes sodium in exchange for external protons. The sequence is that of Na(+)/H(+) antiporter NhaB from Actinobacillus pleuropneumoniae serotype 3 (strain JL03).